The sequence spans 516 residues: Bifunctional pantoate ligase/cytidylate kinase (516 aa).

The interval 1 to 279 (MVRKIFQTNA…CGSTRLIDHT (279 aa)) is pantoate--beta-alanine ligase. 29–36 (MGGLHPGH) serves as a coordination point for ATP. Residue His36 is the Proton donor of the active site. Gln64 is a (R)-pantoate binding site. Gln64 is a beta-alanine binding site. ATP is bound at residue 153–156 (GEKD). Gln159 is a binding site for (R)-pantoate. Residue 190-193 (YSSR) participates in ATP binding. Positions 280–516 (FLMHRKPIIA…PEEVWPTPNS (237 aa)) are cytidylate kinase.

In the N-terminal section; belongs to the pantothenate synthetase family. The protein in the C-terminal section; belongs to the cytidylate kinase family. Type 1 subfamily.

The protein resides in the cytoplasm. The enzyme catalyses (R)-pantoate + beta-alanine + ATP = (R)-pantothenate + AMP + diphosphate + H(+). It catalyses the reaction CMP + ATP = CDP + ADP. It carries out the reaction dCMP + ATP = dCDP + ADP. It participates in cofactor biosynthesis; (R)-pantothenate biosynthesis; (R)-pantothenate from (R)-pantoate and beta-alanine: step 1/1. Its function is as follows. Catalyzes the condensation of pantoate with beta-alanine in an ATP-dependent reaction via a pantoyl-adenylate intermediate. In terms of biological role, catalyzes the transfer of a phosphate group from ATP to either CMP or dCMP to form CDP or dCDP and ADP, respectively. This chain is Bifunctional pantoate ligase/cytidylate kinase, found in Prochlorococcus marinus (strain NATL1A).